A 191-amino-acid chain; its full sequence is Prostaglandin-H2 D-isomerase (191 aa).

The first 24 residues, 1–24, serve as a signal peptide directing secretion; that stretch reads MAALHTLWMGLVLLGVLGVLQTRA. Gln25 is subject to Pyrrolidone carboxylic acid. Asn51 is a glycosylation site (N-linked (GlcNAc...) asparagine). Cys65 acts as the Nucleophile in catalysis. Asn78 carries an N-linked (GlcNAc...) asparagine glycan. Cys89 and Cys186 are oxidised to a cystine.

The protein belongs to the calycin superfamily. Lipocalin family. In terms of assembly, monomer. In terms of processing, N- and O-glycosylated. Both N-glycosylation recognition sites are almost quantitatively occupied by N-glycans of the biantennary complex type, with a considerable proportion of structures bearing a bisecting GlcNAc. N-glycan at Asn-78: dHex1Hex5HexNAc4. Agalacto structure as well as sialylated and nonsialylated oligosaccharides bearing alpha2-3- and/or alpha2-6-linked NeuNAc are present.

The protein resides in the rough endoplasmic reticulum. It is found in the nucleus membrane. It localises to the golgi apparatus. Its subcellular location is the cytoplasm. The protein localises to the perinuclear region. The protein resides in the secreted. The enzyme catalyses prostaglandin H2 = prostaglandin D2. Functionally, catalyzes the conversion of PGH2 to PGD2, a prostaglandin involved in smooth muscle contraction/relaxation and a potent inhibitor of platelet aggregation. Involved in a variety of CNS functions, such as sedation, NREM sleep and PGE2-induced allodynia, and may have an anti-apoptotic role in oligodendrocytes. Binds small non-substrate lipophilic molecules, including biliverdin, bilirubin, retinal, retinoic acid and thyroid hormone, and may act as a scavenger for harmful hydrophobic molecules and as a secretory retinoid and thyroid hormone transporter. Possibly involved in development and maintenance of the blood-brain, blood-retina, blood-aqueous humor and blood-testis barrier. It is likely to play important roles in both maturation and maintenance of the central nervous system and male reproductive system. Involved in PLA2G3-dependent maturation of mast cells. PLA2G3 is secreted by immature mast cells and acts on nearby fibroblasts upstream to PTDGS to synthesize PGD2, which in turn promotes mast cell maturation and degranulation via PTGDR. The chain is Prostaglandin-H2 D-isomerase (PTGDS) from Felis catus (Cat).